We begin with the raw amino-acid sequence, 264 residues long: Thymidylate synthase (264 aa).

Arg21 is a binding site for dUMP. (6R)-5,10-methylene-5,6,7,8-tetrahydrofolate is bound at residue His51. Arg126 to Arg127 contributes to the dUMP binding site. Cys146 functions as the Nucleophile in the catalytic mechanism. Residues Arg166–Asp169, Asn177, and His207–Tyr209 each bind dUMP. Asp169 provides a ligand contact to (6R)-5,10-methylene-5,6,7,8-tetrahydrofolate. Ala263 is a binding site for (6R)-5,10-methylene-5,6,7,8-tetrahydrofolate.

The protein belongs to the thymidylate synthase family. Bacterial-type ThyA subfamily. Homodimer.

It localises to the cytoplasm. It catalyses the reaction dUMP + (6R)-5,10-methylene-5,6,7,8-tetrahydrofolate = 7,8-dihydrofolate + dTMP. Its pathway is pyrimidine metabolism; dTTP biosynthesis. Functionally, catalyzes the reductive methylation of 2'-deoxyuridine-5'-monophosphate (dUMP) to 2'-deoxythymidine-5'-monophosphate (dTMP) while utilizing 5,10-methylenetetrahydrofolate (mTHF) as the methyl donor and reductant in the reaction, yielding dihydrofolate (DHF) as a by-product. This enzymatic reaction provides an intracellular de novo source of dTMP, an essential precursor for DNA biosynthesis. This is Thymidylate synthase from Cupriavidus necator (strain ATCC 17699 / DSM 428 / KCTC 22496 / NCIMB 10442 / H16 / Stanier 337) (Ralstonia eutropha).